A 186-amino-acid chain; its full sequence is Elongation factor P (186 aa).

The protein belongs to the elongation factor P family.

It localises to the cytoplasm. The protein operates within protein biosynthesis; polypeptide chain elongation. Its function is as follows. Involved in peptide bond synthesis. Stimulates efficient translation and peptide-bond synthesis on native or reconstituted 70S ribosomes in vitro. Probably functions indirectly by altering the affinity of the ribosome for aminoacyl-tRNA, thus increasing their reactivity as acceptors for peptidyl transferase. This Acidobacterium capsulatum (strain ATCC 51196 / DSM 11244 / BCRC 80197 / JCM 7670 / NBRC 15755 / NCIMB 13165 / 161) protein is Elongation factor P.